Consider the following 150-residue polypeptide: D-aminoacyl-tRNA deacylase (150 aa).

The Gly-cisPro motif, important for rejection of L-amino acids motif lies at 138-139 (GP).

This sequence belongs to the DTD family. In terms of assembly, homodimer.

It localises to the cytoplasm. The catalysed reaction is glycyl-tRNA(Ala) + H2O = tRNA(Ala) + glycine + H(+). It carries out the reaction a D-aminoacyl-tRNA + H2O = a tRNA + a D-alpha-amino acid + H(+). An aminoacyl-tRNA editing enzyme that deacylates mischarged D-aminoacyl-tRNAs. Also deacylates mischarged glycyl-tRNA(Ala), protecting cells against glycine mischarging by AlaRS. Acts via tRNA-based rather than protein-based catalysis; rejects L-amino acids rather than detecting D-amino acids in the active site. By recycling D-aminoacyl-tRNA to D-amino acids and free tRNA molecules, this enzyme counteracts the toxicity associated with the formation of D-aminoacyl-tRNA entities in vivo and helps enforce protein L-homochirality. This is D-aminoacyl-tRNA deacylase from Bacteroides fragilis (strain ATCC 25285 / DSM 2151 / CCUG 4856 / JCM 11019 / LMG 10263 / NCTC 9343 / Onslow / VPI 2553 / EN-2).